Consider the following 968-residue polypeptide: RNA polymerase-associated protein RapA (968 aa).

The Helicase ATP-binding domain maps to Asp164–Asn334. Asp177 to Thr184 lines the ATP pocket. The DEAH box motif lies at Asp280–His283. In terms of domain architecture, Helicase C-terminal spans Arg490 to Arg685.

The protein belongs to the SNF2/RAD54 helicase family. RapA subfamily. As to quaternary structure, interacts with the RNAP. Has a higher affinity for the core RNAP than for the holoenzyme. Its ATPase activity is stimulated by binding to RNAP.

Functionally, transcription regulator that activates transcription by stimulating RNA polymerase (RNAP) recycling in case of stress conditions such as supercoiled DNA or high salt concentrations. Probably acts by releasing the RNAP, when it is trapped or immobilized on tightly supercoiled DNA. Does not activate transcription on linear DNA. Probably not involved in DNA repair. This chain is RNA polymerase-associated protein RapA, found in Salmonella schwarzengrund (strain CVM19633).